A 93-amino-acid polypeptide reads, in one-letter code: MSSTFDKVADIIAETSEIDRDTITPESHTIDDLGIDSLDFLDIVFAIDKAFGIKIPLEQWTQEVNEGKVPTEEYFVLKNLCAKIDELVAAKKG.

The Carrier domain maps to 2-88; that stretch reads SSTFDKVADI…NLCAKIDELV (87 aa). S37 carries the post-translational modification O-(pantetheine 4'-phosphoryl)serine.

4'-phosphopantetheine is transferred from CoA to a specific serine of apo-ACP by AcpS. This modification is essential for activity because fatty acids are bound in thioester linkage to the sulfhydryl of the prosthetic group.

Its subcellular location is the cytoplasm. It functions in the pathway glycolipid biosynthesis; KDO(2)-lipid A biosynthesis. Carrier of the growing fatty acid chain in fatty acid biosynthesis. Is involved in the transfer of long hydroxylated fatty acids to lipid A. This is Acyl carrier protein AcpXL (acpXL) from Brucella melitensis biotype 1 (strain ATCC 23456 / CCUG 17765 / NCTC 10094 / 16M).